We begin with the raw amino-acid sequence, 395 residues long: MLNTRLIAMSTSDGAPETKKQRPESSSNGSKDQNGTEAGAEGDSRDKVALITGITGQDGSYLAEFLLKKDYEVHGIIRRASTFNTTRIEHLYADPKAHKGGRMKLHYGDMTDSSSLVKIINMVKPTEIYNLAAQSHVKVSFDLSEYTAEVDAVGTLRILDAIRTCGMEKNVRFYQASTSELYGKVVETPQNEQTPFYPRSPYACAKMYGFWIVINYREAYNMYACNGILFNHESPRRGENFVTRKITRSVAKIYHKQMEYFELGNLDSKRDWGHASDYVEAMWMMLQRESPSDYVIATGETHSVREFVEAAFKHIDREITWKGKGVDEVGVENGTGIVRVRINPKYFRPTEVDLLQGDASKANRELNWTPKVTFVELVSDMMKADIELMRKNPIA.

Polar residues-rich tracts occupy residues 1 to 13 (MLNTRLIAMSTSD) and 24 to 36 (ESSSNGSKDQNGT). Residues 1–44 (MLNTRLIAMSTSDGAPETKKQRPESSSNGSKDQNGTEAGAEGDS) are disordered. NADP(+)-binding positions include 53 to 58 (GITGQD), 109 to 110 (DM), 131 to 135 (LAAQS), and Tyr146. The active site involves Thr178. Residues Glu180 and Tyr202 each act as nucleophile in the active site. Lys206, His232, and Arg237 together coordinate NADP(+).

Belongs to the NAD(P)-dependent epimerase/dehydratase family. GDP-mannose 4,6-dehydratase subfamily. It depends on NADP(+) as a cofactor.

It catalyses the reaction GDP-alpha-D-mannose = GDP-4-dehydro-alpha-D-rhamnose + H2O. It functions in the pathway nucleotide-sugar biosynthesis; GDP-L-fucose biosynthesis via de novo pathway; GDP-L-fucose from GDP-alpha-D-mannose: step 1/2. In terms of biological role, catalyzes the conversion of GDP-D-mannose to GDP-4-dehydro-6-deoxy-D-mannose (also known as GDP-4-keto-6-deoxy-D-mannose or GDP-4-dehydro-alpha-D-rhamnose), an essential step in the synthesis of GDP-fucose from GDP-mannose. In Drosophila melanogaster (Fruit fly), this protein is GDP-mannose 4,6 dehydratase (Gmd).